The primary structure comprises 378 residues: Histone deacetylase 8 (378 aa).

A histone deacetylase region spans residues arginine 15–glycine 325. Aspartate 102 is a binding site for substrate. The active-site Proton acceptor is histidine 144. Substrate is bound at residue glycine 152. A divalent metal cation is bound by residues aspartate 179, histidine 181, and aspartate 268. Tyrosine 307 contributes to the substrate binding site.

The protein belongs to the histone deacetylase family. HD type 1 subfamily. The cofactor is a divalent metal cation.

The protein resides in the nucleus. Its subcellular location is the chromosome. It is found in the cytoplasm. The enzyme catalyses N(6)-acetyl-L-lysyl-[histone] + H2O = L-lysyl-[histone] + acetate. It carries out the reaction N(6)-acetyl-L-lysyl-[protein] + H2O = L-lysyl-[protein] + acetate. It catalyses the reaction N(6)-(2E)-butenoyl-L-lysyl-[protein] + H2O = (2E)-2-butenoate + L-lysyl-[protein]. Its activity is inhibited by trichostatin A (TSA) and butyrate, 2 well known histone deacetylase inhibitors. In terms of biological role, histone deacetylase that catalyzes the deacetylation of lysine residues on the N-terminal part of the core histones (H2A, H2B, H3 and H4). Histone deacetylation gives a tag for epigenetic repression and plays an important role in transcriptional regulation, cell cycle progression and developmental events. Histone deacetylases act via the formation of large multiprotein complexes. Also involved in the deacetylation of non-histone proteins. In addition to protein deacetylase activity, also has protein-lysine deacylase activity: acts as a protein decrotonylase by mediating decrotonylation ((2E)-butenoyl) of histones. The chain is Histone deacetylase 8 (hdac8) from Danio rerio (Zebrafish).